Reading from the N-terminus, the 389-residue chain is MGQNLSTSNPLGFFPDHQLDPAFRANTANPDWDFNPNKDTWPDANKVGAGAFGLGFTPPHGGLLGWSPQAQGIIQTLPANPPPASTNRQTGRQPTPLSPPLRNTHPQAMQWNSTTFHQTLQDPRVRGLYFPAGGSSSGTVNPVPTTASPISSIFSRIGDPALNMENITSGLLGPLLVLQAGFFLLTRILTIPQSLDSWWTSLNFLGGTTVCLGQNSQSPTSNHSPTSCPPTCPGYRWMCLRRFIIFLFILLLCLIFLLVLLDYQGMLPVCPLIPGSSTTSVGPCRTCTTTVQGTSMYPSCCCTKPSDGNCTCIPIPSSWAFGKFLWEWASARFSWLSLLVPFVQWFVGLSPTVWLSVIWMMWYWGPSLYRILSPFLPLLPIFFCLWVYI.

Position 1 is an N-acetylmethionine (M1). G2 carries N-myristoyl glycine; by host lipidation. Positions 2-108 (GQNLSTSNPL…PPLRNTHPQA (107 aa)) are pre-S1. A pre-S region spans residues 2-163 (GQNLSTSNPL…FSRIGDPALN (162 aa)). The Virion surface; in external conformation portion of the chain corresponds to 2-170 (GQNLSTSNPL…ALNMENITSG (169 aa)). At 2 to 242 (GQNLSTSNPL…PGYRWMCLRR (241 aa)) the chain is on the intravirion; in internal conformation side. The segment at 77–101 (LPANPPPASTNRQTGRQPTPLSPPL) is disordered. Residues 85 to 95 (STNRQTGRQPT) show a composition bias toward polar residues. The pre-S2 stretch occupies residues 109–163 (MQWNSTTFHQTLQDPRVRGLYFPAGGSSSGTVNPVPTTASPISSIFSRIGDPALN). A helical membrane pass occupies residues 171–191 (LLGPLLVLQAGFFLLTRILTI). Residues 192–242 (PQSLDSWWTSLNFLGGTTVCLGQNSQSPTSNHSPTSCPPTCPGYRWMCLRR) lie on the Intravirion; in external conformation side of the membrane. The helical transmembrane segment at 243-263 (FIIFLFILLLCLIFLLVLLDY) threads the bilayer. The Virion surface segment spans residues 264–337 (QGMLPVCPLI…WASARFSWLS (74 aa)). N-linked (GlcNAc...) asparagine; by host glycosylation is present at N309. A helical transmembrane segment spans residues 338-358 (LLVPFVQWFVGLSPTVWLSVI). Residues 359 to 364 (WMMWYW) lie on the Intravirion side of the membrane. A helical membrane pass occupies residues 365 to 387 (GPSLYRILSPFLPLLPIFFCLWV). At 388–389 (YI) the chain is on the virion surface side.

The protein belongs to the orthohepadnavirus major surface antigen family. In its internal form (Li-HBsAg), interacts with the capsid protein and with the isoform S. Interacts with host chaperone CANX. As to quaternary structure, associates with host chaperone CANX through its pre-S2 N glycan; this association may be essential for isoform M proper secretion. In terms of assembly, interacts with isoform L. Interacts with the antigens of satellite virus HDV (HDVAgs); this interaction is required for encapsidation of HDV genomic RNA. In terms of processing, isoform M is N-terminally acetylated by host at a ratio of 90%, and N-glycosylated by host at the pre-S2 region. Post-translationally, myristoylated.

It localises to the virion membrane. The large envelope protein exists in two topological conformations, one which is termed 'external' or Le-HBsAg and the other 'internal' or Li-HBsAg. In its external conformation the protein attaches the virus to cell receptors and thereby initiating infection. This interaction determines the species specificity and liver tropism. This attachment induces virion internalization predominantly through caveolin-mediated endocytosis. The large envelope protein also assures fusion between virion membrane and endosomal membrane. In its internal conformation the protein plays a role in virion morphogenesis and mediates the contact with the nucleocapsid like a matrix protein. In terms of biological role, the middle envelope protein plays an important role in the budding of the virion. It is involved in the induction of budding in a nucleocapsid independent way. In this process the majority of envelope proteins bud to form subviral lipoprotein particles of 22 nm of diameter that do not contain a nucleocapsid. The protein is Large envelope protein of Hepatitis B virus genotype D (isolate Germany/1-91/1991) (HBV-D).